Here is a 133-residue protein sequence, read N- to C-terminus: Large ribosomal subunit protein uL15 (133 aa).

Positions 1–57 are disordered; sequence MALEKLTPAAGSTHATKRIGRGQGSGNGKTAGKGNKGQRARKGYNEKRGFEGGQQPL. Gly residues predominate over residues 21–35; the sequence is RGQGSGNGKTAGKGN.

It belongs to the universal ribosomal protein uL15 family. In terms of assembly, part of the 50S ribosomal subunit.

Its function is as follows. Binds to the 23S rRNA. The polypeptide is Large ribosomal subunit protein uL15 (Campylobacter concisus (strain 13826)).